Here is a 313-residue protein sequence, read N- to C-terminus: tRNA dimethylallyltransferase (313 aa).

8–15 (GPTGTGKS) contacts ATP. 10–15 (TGTGKS) is a binding site for substrate.

It belongs to the IPP transferase family. Monomer. Mg(2+) serves as cofactor.

It carries out the reaction adenosine(37) in tRNA + dimethylallyl diphosphate = N(6)-dimethylallyladenosine(37) in tRNA + diphosphate. Catalyzes the transfer of a dimethylallyl group onto the adenine at position 37 in tRNAs that read codons beginning with uridine, leading to the formation of N6-(dimethylallyl)adenosine (i(6)A). The chain is tRNA dimethylallyltransferase from Mycolicibacterium gilvum (strain PYR-GCK) (Mycobacterium gilvum (strain PYR-GCK)).